Consider the following 234-residue polypeptide: Sugar fermentation stimulation protein homolog (234 aa).

Belongs to the SfsA family.

This Shewanella sp. (strain MR-4) protein is Sugar fermentation stimulation protein homolog.